A 474-amino-acid chain; its full sequence is MQKTKMIFTIGPSSDSEEILREFIRIGMNAARLNFSHGDHASHKEKIELIKRLRKEEKSATAILLDIKGPKIRTYNFKNGEAELKNGDEFTFSCGDEILGDNTKCSISYKELYEDIKPGGSILVDDGLLEFKVKEVRGTDIICEVIEGGTIKDHKGVNVPNVPIKLPAVTEKDRSDLIFGCEMEVDFVAASFIRKPEDVLEVREILDSHGGKDIKIISKIESQEGVDNIKEIIKVTDGVMVARGDMGVEIPIENVPIIQKNIIKKCNQAGKIVITATQMLDSMIRNPRPTRAEASDVCNAIFDGTDAIMLSGESASGSFPIEAAMTMSRIAKKAEANLDYNYLLRRLKDPNPNPDAFADAISYSASKTASKFPTKAIVAATQTGSTAKILSKYKPSCPIIAITPYEKVRRSLALNFGIISKKCAYFNSTDEIIEEARKVAKEFEIAETGDNIMVAAGFPTSITGGTNMLKIEKI.

Arg-32 is a substrate binding site. Residues Asn-34, Ser-36, and Asp-66 each coordinate K(+). 34–37 (NFSH) contacts ATP. Arg-73 and Lys-155 together coordinate ATP. A Mg(2+)-binding site is contributed by Glu-221. Positions 244, 245, and 277 each coordinate substrate. Residue Asp-245 participates in Mg(2+) binding.

This sequence belongs to the pyruvate kinase family. Homotetramer. Mg(2+) serves as cofactor. K(+) is required as a cofactor.

It carries out the reaction pyruvate + ATP = phosphoenolpyruvate + ADP + H(+). The protein operates within carbohydrate degradation; glycolysis; pyruvate from D-glyceraldehyde 3-phosphate: step 5/5. The sequence is that of Pyruvate kinase (pykF) from Clostridium perfringens (strain 13 / Type A).